A 598-amino-acid polypeptide reads, in one-letter code: N-acetylmuramoyl-L-alanine amidase (598 aa).

The signal sequence occupies residues 1-31 (MSPGNWKTTMVVRGILLILYGLLLQPEPGTA). 2 disordered regions span residues 172-194 (SSAH…SPNV) and 212-233 (STGV…KAKS). Residue S261 is modified to Phosphoserine. N-linked (GlcNAc...) asparagine glycosylation occurs at N353. The 127-residue stretch at 428-554 (FLYIHHTYVP…RQLVRTDCPG (127 aa)) folds into the N-acetylmuramoyl-L-alanine amidase domain. H432 provides a ligand contact to Zn(2+). A disulfide bond links C441 and C447. The N-linked (GlcNAc...) asparagine glycan is linked to N507. 2 residues coordinate Zn(2+): H544 and C552.

It belongs to the N-acetylmuramoyl-L-alanine amidase 2 family. Zn(2+) serves as cofactor.

Its subcellular location is the secreted. The protein localises to the membrane. It catalyses the reaction Hydrolyzes the link between N-acetylmuramoyl residues and L-amino acid residues in certain cell-wall glycopeptides.. In terms of biological role, may play a scavenger role by digesting biologically active peptidoglycan (PGN) into biologically inactive fragments. Has no direct bacteriolytic activity. This is N-acetylmuramoyl-L-alanine amidase (PGLYRP2) from Sus scrofa (Pig).